Consider the following 440-residue polypeptide: Alpha-ionylideneethane synthase aba3 (440 aa).

This sequence belongs to the alpha-ionylideneethane synthase family.

The protein operates within hormone biosynthesis. Functionally, alpha-ionylideneethane synthase; part of the gene cluster that mediates the biosynthesis of abscisic acid (ABA), a phytohormone that acts antagonistically toward salicylic acid (SA), jasmonic acid (JA) and ethylene (ETH) signaling, to impede plant defense responses. The first step of the pathway catalyzes the reaction from farnesyl diphosphate to alpha-ionylideneethane performed by the alpha-ionylideneethane synthase aba3 via a three-step reaction mechanism involving 2 neutral intermediates, beta-farnesene and allofarnesene. The cytochrome P450 monooxygenase aba1 might then be involved in the conversion of alpha-ionylideneethane to alpha-ionylideneacetic acid. Alpha-ionylideneacetic acid is further converted to abscisic acid in 2 steps involving the cytochrome P450 monooxygenase aba2 and the short-chain dehydrogenase/reductase aba4, via the intermediates 1'-deoxy-ABA or 1',4'-trans-diol-ABA, depending on the order of action of these 2 enzymes. Aba2 is responsible for the hydroxylation of carbon atom C-1' and aba4 might be involved in the oxidation of the C-4' carbon atom. This Botryotinia fuckeliana (strain B05.10) (Noble rot fungus) protein is Alpha-ionylideneethane synthase aba3.